The sequence spans 482 residues: Solute carrier family 49 member A3 (482 aa).

Transmembrane regions (helical) follow at residues 41–61, 81–101, 109–129, 150–170, 181–201, 206–226, 264–284, 296–316, 330–350, 355–375, 390–410, and 437–457; these read WFVLGVICLLSCTNAMLWISF, YLSLVYLIIAIPVGFGASWLI, AIVFSSWLNMIGSIIRCGAIV, LCAIAQPLVLFVPAKLASVWF, IASMSNPLGVLLANIISPSVV, YIAHMLGIYTVPAIAACILAT, VILMLCFGAGIGIFTAISSFL, LFAGVCGALFIFFGFIGAFVC, VKTCFALTALTSIAFALVINF, VLVACVCSLLGLFGFAISPVG, SSTGLAFISGQIQGIIYMILF, and TSMLVMAALCSFGSCIFIIFF.

The protein belongs to the major facilitator superfamily.

Its subcellular location is the membrane. The sequence is that of Solute carrier family 49 member A3 (slc49a3) from Xenopus tropicalis (Western clawed frog).